The primary structure comprises 318 residues: NADH-ubiquinone oxidoreductase chain 1 (318 aa).

Transmembrane regions (helical) follow at residues 2–22 (PMAN…FLML), 68–88 (ITLY…LWTP), 100–120 (LGLL…LWSG), 146–166 (LAII…STLI), 171–191 (HLWL…STLA), 231–251 (IIMM…DALS), 253–273 (ELYT…FLWI), and 294–314 (LPLT…ISSI).

This sequence belongs to the complex I subunit 1 family. Core subunit of respiratory chain NADH dehydrogenase (Complex I) which is composed of 45 different subunits.

It is found in the mitochondrion inner membrane. The catalysed reaction is a ubiquinone + NADH + 5 H(+)(in) = a ubiquinol + NAD(+) + 4 H(+)(out). Functionally, core subunit of the mitochondrial membrane respiratory chain NADH dehydrogenase (Complex I) which catalyzes electron transfer from NADH through the respiratory chain, using ubiquinone as an electron acceptor. Essential for the catalytic activity and assembly of complex I. The polypeptide is NADH-ubiquinone oxidoreductase chain 1 (MT-ND1) (Homo sapiens (Human)).